Reading from the N-terminus, the 358-residue chain is PqqA peptide cyclase (358 aa).

One can recognise a Radical SAM core domain in the interval 4-219 (PSPPMSLLAE…VEAERAKGGL (216 aa)). Residues cysteine 18, cysteine 22, and cysteine 25 each coordinate [4Fe-4S] cluster.

This sequence belongs to the radical SAM superfamily. PqqE family. In terms of assembly, interacts with PqqD. The interaction is necessary for activity of PqqE. [4Fe-4S] cluster serves as cofactor.

It carries out the reaction [PQQ precursor protein] + S-adenosyl-L-methionine = E-Y cross-linked-[PQQ precursor protein] + 5'-deoxyadenosine + L-methionine + H(+). The protein operates within cofactor biosynthesis; pyrroloquinoline quinone biosynthesis. In terms of biological role, catalyzes the cross-linking of a glutamate residue and a tyrosine residue in the PqqA protein as part of the biosynthesis of pyrroloquinoline quinone (PQQ). This Gluconobacter oxydans (strain 621H) (Gluconobacter suboxydans) protein is PqqA peptide cyclase.